A 336-amino-acid chain; its full sequence is Ketoreductase adrE (336 aa).

Position 171 (Y171) interacts with NADP(+).

Belongs to the NAD(P)-dependent epimerase/dehydratase family. Dihydroflavonol-4-reductase subfamily.

It participates in secondary metabolite biosynthesis; terpenoid biosynthesis. Its function is as follows. Ketoreductase; part of the gene cluster that mediates the biosynthesis of andrastins, meroterpenoid compounds that exhibit inhibitory activity against ras farnesyltransferase, suggesting that they could be promising leads for antitumor agents. The first step of the pathway is the synthesis of 3,5-dimethylorsellinic acid (DMOA) by the polyketide synthase adrD via condensation of one acetyl-CoA starter unit with 3 malonyl-CoA units and 2 methylations. DMAO is then converted to farnesyl-DMAO by the prenyltransferase adrG. The methyltransferase adrK catalyzes the methylation of the carboxyl group of farnesyl-DMAO to farnesyl-DMAO methyl ester which is further converted to epoxyfarnesyl-DMAO methyl ester by the FAD-dependent monooxygenase adrH. The terpene cyclase adrI then catalyzes the carbon skeletal rearrangement to generate the andrastin E, the first compound in the pathway having the andrastin scaffold, with the tetracyclic ring system. The post-cyclization tailoring enzymes adrF, adrE, adrJ, and adrA, are involved in the conversion of andrastin E into andrastin A. The short chain dehydrogenase adrF is responsible for the oxidation of the C-3 a hydroxyl group of andrastin E to yield the corresponding ketone, andrastin D. The ketoreductase adrE stereoselectively reduces the carbonyl moiety to reverse the stereochemistry of the C-3 position to yield andrastin F. The acetyltransferase adrJ is the acetyltransferase that attaches the acetyl group to the C-3 hydroxyl group of andrastin F to yield andrastin C. Finally, the cytochrome P450 monooxygenase adrA catalyzes two sequential oxidation reactions of the C-23 methyl group, to generate the corresponding alcohol andrastin B, and aldehyde andrastin A. This is Ketoreductase adrE from Penicillium roqueforti.